The following is a 386-amino-acid chain: O-methyltransferase 11 (386 aa).

S-adenosyl-L-homocysteine-binding residues include Ser207, Gly231, Asp254, Asp274, and Lys288. Asp254 contributes to the S-adenosyl-L-methionine binding site. His292 serves as the catalytic Proton acceptor.

It belongs to the class I-like SAM-binding methyltransferase superfamily. Cation-independent O-methyltransferase family. In terms of assembly, homodimer.

It catalyses the reaction dopamine + S-adenosyl-L-methionine = 4-methoxytyramine + S-adenosyl-L-homocysteine + H(+). The catalysed reaction is 3,4-dihydroxy-5-methoxyphenethylamine + S-adenosyl-L-methionine = 3-hydroxy-4,5-dimethoxyphenethylamine + S-adenosyl-L-homocysteine + H(+). It carries out the reaction 3-hydroxy-4,5-dimethoxyphenethylamine + S-adenosyl-L-methionine = mescaline + S-adenosyl-L-homocysteine + H(+). The enzyme catalyses 4-hydroxy-3,5-dimethoxyphenethylamine + S-adenosyl-L-methionine = mescaline + S-adenosyl-L-homocysteine + H(+). Its pathway is aromatic compound metabolism. It participates in alkaloid biosynthesis. Functionally, O-methyltransferase participating in the biosynthesis of natural products derived from phenylethylamine, including mescaline, a natural hallucinogen potentially used in psychotherapeutic treatments. Catalyzes the O-methylation of mescaline para hydroxyl groups, using dopamine, 3,4-dihydroxy-5-methoxyphenethylamine, 3-hydroxy-4,5-dimethoxyphenethylamine and 4-hydroxy-3,5-dimethoxyphenethylamine as substrates. In Lophophora williamsii (Peyote), this protein is O-methyltransferase 11.